Consider the following 262-residue polypeptide: Small ribosomal subunit protein uS2 (262 aa).

Residues 225–262 (KQGEQLTEEAKPEDKEDEKGQAEEKEVKEENNSANKEE) form a disordered region. Residues 232-262 (EEAKPEDKEDEKGQAEEKEVKEENNSANKEE) are compositionally biased toward basic and acidic residues.

This sequence belongs to the universal ribosomal protein uS2 family.

The chain is Small ribosomal subunit protein uS2 from Halothermothrix orenii (strain H 168 / OCM 544 / DSM 9562).